Reading from the N-terminus, the 362-residue chain is NAC domain-containing protein 5 (362 aa).

Positions 3–151 constitute an NAC domain; it reads NPVGFRFRPT…TYTLCKVKFK (149 aa). Residues 107-157 mediate DNA binding; the sequence is IGEKRVLVFKNHGGSKSDWAMHEYHATFSSPNQIMTYTLCKVKFKGERREF. The tract at residues 240–266 is disordered; that stretch reads DDRNNHTPQKPLTGVFSDHSTDGSDSD.

The protein resides in the nucleus. The chain is NAC domain-containing protein 5 (NAC005) from Arabidopsis thaliana (Mouse-ear cress).